Here is a 352-residue protein sequence, read N- to C-terminus: tRNA pseudouridine synthase D (352 aa).

The active-site Nucleophile is D81. One can recognise a TRUD domain in the interval 157–303 (GVPNYFGLQR…MLHERRILRL (147 aa)).

Belongs to the pseudouridine synthase TruD family.

It carries out the reaction uridine(13) in tRNA = pseudouridine(13) in tRNA. In terms of biological role, responsible for synthesis of pseudouridine from uracil-13 in transfer RNAs. In Azotobacter vinelandii (strain DJ / ATCC BAA-1303), this protein is tRNA pseudouridine synthase D.